A 616-amino-acid polypeptide reads, in one-letter code: Chaperone protein HscA (616 aa).

Belongs to the heat shock protein 70 family.

Its function is as follows. Chaperone involved in the maturation of iron-sulfur cluster-containing proteins. Has a low intrinsic ATPase activity which is markedly stimulated by HscB. Involved in the maturation of IscU. The protein is Chaperone protein HscA of Salmonella paratyphi B (strain ATCC BAA-1250 / SPB7).